Consider the following 535-residue polypeptide: Light-independent protochlorophyllide reductase subunit B (535 aa).

Asp-36 serves as a coordination point for [4Fe-4S] cluster. Asp-292 functions as the Proton donor in the catalytic mechanism. Residue 428 to 429 (GL) coordinates substrate.

Belongs to the ChlB/BchB/BchZ family. In terms of assembly, protochlorophyllide reductase is composed of three subunits; BchL, BchN and BchB. Forms a heterotetramer of two BchB and two BchN subunits. The cofactor is [4Fe-4S] cluster.

It catalyses the reaction chlorophyllide a + oxidized 2[4Fe-4S]-[ferredoxin] + 2 ADP + 2 phosphate = protochlorophyllide a + reduced 2[4Fe-4S]-[ferredoxin] + 2 ATP + 2 H2O. It functions in the pathway porphyrin-containing compound metabolism; bacteriochlorophyll biosynthesis (light-independent). In terms of biological role, component of the dark-operative protochlorophyllide reductase (DPOR) that uses Mg-ATP and reduced ferredoxin to reduce ring D of protochlorophyllide (Pchlide) to form chlorophyllide a (Chlide). This reaction is light-independent. The NB-protein (BchN-BchB) is the catalytic component of the complex. This is Light-independent protochlorophyllide reductase subunit B from Chlorobaculum parvum (strain DSM 263 / NCIMB 8327) (Chlorobium vibrioforme subsp. thiosulfatophilum).